A 630-amino-acid chain; its full sequence is Amino acid transporter heavy chain SLC3A2 (630 aa).

At methionine 1 the chain carries N-acetylmethionine. Residue glutamate 2 is modified to N-acetylserine. Position 2 is a phosphoserine (glutamate 2). Residues 15–39 (IPRQLPGSHSEAGVQGLSAGDDSEL) form a disordered region. The Cytoplasmic portion of the chain corresponds to 102 to 184 (MSQDTEVDMK…SPGWVRTRWA (83 aa)). Serine 103 bears the Phosphoserine mark. Threonine 106 is subject to Phosphothreonine. Serine 134 is subject to Phosphoserine. Lysine 147 participates in a covalent cross-link: Glycyl lysine isopeptide (Lys-Gly) (interchain with G-Cter in ubiquitin). Position 165 is a phosphoserine (serine 165). Lysine 166 is covalently cross-linked (Glycyl lysine isopeptide (Lys-Gly) (interchain with G-Cter in SUMO2)). The helical; Signal-anchor for type II membrane protein transmembrane segment at 185–205 (LLLLFWLGWLGMLAGAVVIIV) threads the bilayer. Residues 206-630 (RAPRCRELPA…GLLLRFPYAA (425 aa)) lie on the Extracellular side of the membrane. 2 N-linked (GlcNAc...) asparagine glycosylation sites follow: asparagine 365 and asparagine 381. Residues serine 406, serine 408, and serine 410 each carry the phosphoserine modification. Asparagine 424 carries an N-linked (GlcNAc...) (complex) asparagine glycan. Asparagine 506 is a glycosylation site (N-linked (GlcNAc...) asparagine). Serine 527 and serine 531 each carry phosphoserine.

As to quaternary structure, disulfide-linked heterodimer with a non-glycosylated catalytic light subunit (SLC7A5, SLC7A6, SLC7A7, SLC7A8, SLC7A10 or SLC7A11). Interacts with TLCD3A/CT120. Interacts with ICAM1. Constitutively and specifically associates with beta-1 integrins (alpha-2/beta-1, alpha-3/beta-1, alpha-5/beta-1 and alpha-6/beta-1), but minimally with alpha-4/beta-1. Interacts with LAPTM4B; recruits SLC3A2 and SLC7A5/LAT1 to lysosomes to promote leucine uptake into these organelles and is required for mTORC1 activation. In terms of assembly, (Microbial infection) Interacts with hepatitis C virus/HCV envelope glycoprotein E2; the interaction may facilitate viral entry into host cell. In terms of processing, N-glycosylated; N-glycosylation is crucial for trafficking and stability of SLC3A2 to the plasma membrane. Post-translationally, phosphorylation on Ser-406; Ser-408 or Ser-410 and on Ser-527 or Ser-531 by ecto-protein kinases favors heterotypic cell-cell interactions. In terms of tissue distribution, expressed ubiquitously in all tissues tested with highest levels detected in kidney, placenta and testis and weakest level in thymus. During gestation, expression in the placenta was significantly stronger at full-term than at the mid-trimester stage. Expressed in HUVECS and at low levels in resting peripheral blood T-lymphocytes and quiescent fibroblasts. Also expressed in fetal liver and in the astrocytic process of primary astrocytic gliomas. Expressed in retinal endothelial cells and in the intestinal epithelial cell line C2BBe1.

It is found in the apical cell membrane. Its subcellular location is the cell membrane. The protein resides in the cell junction. The protein localises to the lysosome membrane. It localises to the melanosome. It is found in the basolateral cell membrane. Functionally, acts as a chaperone that facilitates biogenesis and trafficking of functional transporters heterodimers to the plasma membrane. Forms heterodimer with SLC7 family transporters (SLC7A5, SLC7A6, SLC7A7, SLC7A8, SLC7A10 and SLC7A11), a group of amino-acid antiporters. Heterodimers function as amino acids exchangers, the specificity of the substrate depending on the SLC7A subunit. Heterodimers SLC3A2/SLC7A6 or SLC3A2/SLC7A7 mediate the uptake of dibasic amino acids. Heterodimer SLC3A2/SLC7A11 functions as an antiporter by mediating the exchange of extracellular anionic L-cystine and intracellular L-glutamate across the cellular plasma membrane. SLC3A2/SLC7A10 translocates small neutral L- and D-amino acids across the plasma membrane. SLC3A2/SLC75 or SLC3A2/SLC7A8 translocates neutral amino acids with broad specificity, thyroid hormones and L-DOPA. SLC3A2 is essential for plasma membrane localization, stability, and the transport activity of SLC7A5 and SLC7A8. When associated with LAPTM4B, the heterodimer SLC7A5 is recruited to lysosomes to promote leucine uptake into these organelles, and thereby mediates mTORC1 activation. Modulates integrin-related signaling and is essential for integrin-dependent cell spreading, migration and tumor progression. Its function is as follows. (Microbial infection) In case of hepatitis C virus/HCV infection, the complex formed by SLC3A2 and SLC7A5/LAT1 plays a role in HCV propagation by facilitating viral entry into host cell and increasing L-leucine uptake-mediated mTORC1 signaling activation, thereby contributing to HCV-mediated pathogenesis. (Microbial infection) Acts as a receptor for malaria parasite Plasmodium vivax (Thai isolate) in immature red blood cells. In Homo sapiens (Human), this protein is Amino acid transporter heavy chain SLC3A2.